The primary structure comprises 550 residues: Arginine--tRNA ligase (550 aa).

The short motif at 130 to 140 (ANPTGPIHIGG) is the 'HIGH' region element.

This sequence belongs to the class-I aminoacyl-tRNA synthetase family. Monomer.

Its subcellular location is the cytoplasm. It catalyses the reaction tRNA(Arg) + L-arginine + ATP = L-arginyl-tRNA(Arg) + AMP + diphosphate. This is Arginine--tRNA ligase (argS) from Mycobacterium tuberculosis (strain CDC 1551 / Oshkosh).